The following is a 206-amino-acid chain: Orotate phosphoribosyltransferase (206 aa).

Residues R97, K98, K101, and 125 to 133 (NDVIASGRS) contribute to the 5-phospho-alpha-D-ribose 1-diphosphate site. Orotate is bound at residue R157.

The protein belongs to the purine/pyrimidine phosphoribosyltransferase family. PyrE subfamily. As to quaternary structure, homodimer. It depends on Mg(2+) as a cofactor.

The enzyme catalyses orotidine 5'-phosphate + diphosphate = orotate + 5-phospho-alpha-D-ribose 1-diphosphate. It participates in pyrimidine metabolism; UMP biosynthesis via de novo pathway; UMP from orotate: step 1/2. Catalyzes the transfer of a ribosyl phosphate group from 5-phosphoribose 1-diphosphate to orotate, leading to the formation of orotidine monophosphate (OMP). The polypeptide is Orotate phosphoribosyltransferase (Chlamydia caviae (strain ATCC VR-813 / DSM 19441 / 03DC25 / GPIC) (Chlamydophila caviae)).